We begin with the raw amino-acid sequence, 498 residues long: Guanosine-5'-triphosphate,3'-diphosphate pyrophosphatase (498 aa).

The protein belongs to the GppA/Ppx family. GppA subfamily.

It catalyses the reaction guanosine 3'-diphosphate 5'-triphosphate + H2O = guanosine 3',5'-bis(diphosphate) + phosphate + H(+). The protein operates within purine metabolism; ppGpp biosynthesis; ppGpp from GTP: step 2/2. Functionally, catalyzes the conversion of pppGpp to ppGpp. Guanosine pentaphosphate (pppGpp) is a cytoplasmic signaling molecule which together with ppGpp controls the 'stringent response', an adaptive process that allows bacteria to respond to amino acid starvation, resulting in the coordinated regulation of numerous cellular activities. This chain is Guanosine-5'-triphosphate,3'-diphosphate pyrophosphatase, found in Yersinia pseudotuberculosis serotype O:1b (strain IP 31758).